We begin with the raw amino-acid sequence, 431 residues long: Glutamyl-tRNA reductase (431 aa).

Residues Thr-49–Arg-52, Ser-109, Glu-114–Gln-116, and Gln-120 each bind substrate. The active-site Nucleophile is the Cys-50. Gly-189–Ser-194 is an NADP(+) binding site.

This sequence belongs to the glutamyl-tRNA reductase family. Homodimer.

It catalyses the reaction (S)-4-amino-5-oxopentanoate + tRNA(Glu) + NADP(+) = L-glutamyl-tRNA(Glu) + NADPH + H(+). The protein operates within porphyrin-containing compound metabolism; protoporphyrin-IX biosynthesis; 5-aminolevulinate from L-glutamyl-tRNA(Glu): step 1/2. Its pathway is porphyrin-containing compound metabolism; chlorophyll biosynthesis. Functionally, catalyzes the NADPH-dependent reduction of glutamyl-tRNA(Glu) to glutamate 1-semialdehyde (GSA). The protein is Glutamyl-tRNA reductase of Trichodesmium erythraeum (strain IMS101).